Consider the following 241-residue polypeptide: NH(3)-dependent NAD(+) synthetase (241 aa).

27–34 serves as a coordination point for ATP; that stretch reads GISGGIDS. D33 contributes to the Mg(2+) binding site. R109 provides a ligand contact to deamido-NAD(+). T129 provides a ligand contact to ATP. E134 contacts Mg(2+). K142 and D149 together coordinate deamido-NAD(+). ATP-binding residues include K158 and T180. Position 231–232 (231–232) interacts with deamido-NAD(+); the sequence is HK.

The protein belongs to the NAD synthetase family. In terms of assembly, homodimer.

It catalyses the reaction deamido-NAD(+) + NH4(+) + ATP = AMP + diphosphate + NAD(+) + H(+). The protein operates within cofactor biosynthesis; NAD(+) biosynthesis; NAD(+) from deamido-NAD(+) (ammonia route): step 1/1. In terms of biological role, catalyzes the ATP-dependent amidation of deamido-NAD to form NAD. Uses ammonia as a nitrogen source. The polypeptide is NH(3)-dependent NAD(+) synthetase (Thermoplasma acidophilum (strain ATCC 25905 / DSM 1728 / JCM 9062 / NBRC 15155 / AMRC-C165)).